We begin with the raw amino-acid sequence, 439 residues long: 3beta-hydroxysteroid-dehydrogenase/decarboxylase isoform 1 (439 aa).

Residue 16-21 (GGRGFA) coordinates NAD(+). 2 N-linked (GlcNAc...) asparagine glycosylation sites follow: asparagine 75 and asparagine 158. Residues tyrosine 161 and lysine 165 each contribute to the NAD(+) site. Residue lysine 165 is the Proton donor of the active site. The N-linked (GlcNAc...) asparagine glycan is linked to asparagine 327. The region spanning 371–439 (VTETIQWKKQ…MKVFGSKKID (69 aa)) is the Reticulon; atypical domain. The next 2 membrane-spanning stretches (helical) occupy residues 381–401 (TLIA…TTGS) and 405–425 (IITA…INGI).

It belongs to the 3-beta-HSD family.

It localises to the endoplasmic reticulum membrane. It catalyses the reaction a 3beta-hydroxysteroid-4alpha-carboxylate + NAD(+) = a 3-oxosteroid + CO2 + NADH. The catalysed reaction is 4alpha-carboxy-4beta,14alpha-dimethyl-9beta,19-cyclo-5alpha-ergost-24(24(1))-en-3beta-ol + NAD(+) = cycloeucalenone + CO2 + NADH. The protein operates within steroid biosynthesis; zymosterol biosynthesis; zymosterol from lanosterol: step 4/6. 3beta-hydroxysteroid-dehydrogenase/decarboxylase involved in sterol synthesis. Catalyzes the formation of 3-oxosteroids from 3beta-hydroxysteroids-4alpha-carboxylate. Involved in the regulation of inflorescence internodes and leaves growth, probably by affecting auxin transporter activity possibly by altering sterol composition in the membranes. In Arabidopsis thaliana (Mouse-ear cress), this protein is 3beta-hydroxysteroid-dehydrogenase/decarboxylase isoform 1.